The primary structure comprises 310 residues: Probable manganese-dependent inorganic pyrophosphatase (310 aa).

Residues His9, Asp13, Asp15, Asp76, His98, and Asp150 each coordinate Mn(2+).

It belongs to the PPase class C family. Mn(2+) serves as cofactor.

The protein localises to the cytoplasm. It catalyses the reaction diphosphate + H2O = 2 phosphate + H(+). In Streptococcus thermophilus (strain CNRZ 1066), this protein is Probable manganese-dependent inorganic pyrophosphatase.